Here is a 285-residue protein sequence, read N- to C-terminus: ATP synthase gamma chain (285 aa).

Belongs to the ATPase gamma chain family. F-type ATPases have 2 components, CF(1) - the catalytic core - and CF(0) - the membrane proton channel. CF(1) has five subunits: alpha(3), beta(3), gamma(1), delta(1), epsilon(1). CF(0) has three main subunits: a, b and c.

Its subcellular location is the cell membrane. Produces ATP from ADP in the presence of a proton gradient across the membrane. The gamma chain is believed to be important in regulating ATPase activity and the flow of protons through the CF(0) complex. The protein is ATP synthase gamma chain of Dehalococcoides mccartyi (strain ATCC BAA-2266 / KCTC 15142 / 195) (Dehalococcoides ethenogenes (strain 195)).